We begin with the raw amino-acid sequence, 4543 residues long: Low-density lipoprotein receptor-related protein 1 (4543 aa).

The signal sequence occupies residues 1 to 21; sequence MGPLLALAGCLLALLAAPAAR. The Extracellular segment spans residues 22-4419; that stretch reads ALEAPKTCSP…EFIVGEQQSG (4398 aa). LDL-receptor class A domains are found at residues 27-68 and 72-112; these read KTCS…ICPQ and SRCQ…HCRE. Intrachain disulfides connect cysteine 29–cysteine 42, cysteine 36–cysteine 55, cysteine 49–cysteine 66, cysteine 74–cysteine 87, cysteine 81–cysteine 100, and cysteine 94–cysteine 110. Residues 113-151 enclose the EGF-like 1 domain; sequence QLANCTALGCQHHCVPTLSGPACYCNNSFQLAEDRRSCK. Residue asparagine 116 is glycosylated (N-linked (GlcNAc...) asparagine). 6 disulfide bridges follow: cysteine 117–cysteine 126, cysteine 122–cysteine 135, cysteine 137–cysteine 150, cysteine 156–cysteine 166, cysteine 162–cysteine 175, and cysteine 177–cysteine 190. A glycan (N-linked (GlcNAc...) asparagine) is linked at asparagine 138. In terms of domain architecture, EGF-like 2; calcium-binding spans 152 to 191; the sequence is DFDECTVYGTCSQTCTNTEGSYTCSCVEGYLLQPDNRSCK. N-linked (GlcNAc...) asparagine glycans are attached at residues asparagine 187 and asparagine 276. 3 LDL-receptor class B repeats span residues 294-336, 337-380, and 381-424; these read GNFY…DPAM, GKVF…DLVS, and RLVY…FENY. A glycan (N-linked (GlcNAc...) asparagine) is linked at asparagine 359. The N-linked (GlcNAc...) asparagine glycan is linked to asparagine 448. An EGF-like 3 domain is found at 476-522; it reads RSHACEPDQFGKPGGCSDICLLGNSHKSRTCRCRSGFSLGSDGKSCK. Disulfide bonds link cysteine 480–cysteine 495, cysteine 491–cysteine 506, and cysteine 508–cysteine 521. 4 LDL-receptor class B repeats span residues 573-615, 616-661, 662-712, and 713-756; these read GFIY…DWMG, NNLY…DPLN, GWMY…DIPA, and KILY…YSSF. Asparagine 731 is a glycosylation site (N-linked (GlcNAc...) asparagine). Positions 801–841 constitute an EGF-like 4 domain; that stretch reads GSNKCRVNNGGCSSLCLATPRGRQCACAEDQILGADSVTCE. 33 cysteine pairs are disulfide-bonded: cysteine 805-cysteine 816, cysteine 812-cysteine 825, cysteine 827-cysteine 840, cysteine 852-cysteine 864, cysteine 859-cysteine 877, cysteine 871-cysteine 888, cysteine 893-cysteine 905, cysteine 900-cysteine 918, cysteine 912-cysteine 929, cysteine 934-cysteine 946, cysteine 941-cysteine 959, cysteine 953-cysteine 969, cysteine 974-cysteine 987, cysteine 982-cysteine 1000, cysteine 994-cysteine 1009, cysteine 1013-cysteine 1025, cysteine 1020-cysteine 1038, cysteine 1032-cysteine 1049, cysteine 1060-cysteine 1073, cysteine 1067-cysteine 1086, cysteine 1080-cysteine 1095, cysteine 1102-cysteine 1116, cysteine 1110-cysteine 1129, cysteine 1123-cysteine 1138, cysteine 1143-cysteine 1157, cysteine 1150-cysteine 1170, cysteine 1164-cysteine 1180, cysteine 1183-cysteine 1194, cysteine 1190-cysteine 1204, cysteine 1206-cysteine 1219, cysteine 1225-cysteine 1235, cysteine 1231-cysteine 1244, and cysteine 1246-cysteine 1259. LDL-receptor class A domains are found at residues 850-890, 891-931, 932-971, 972-1011, 1011-1051, 1058-1097, 1100-1140, and 1141-1180; these read PQCQ…LCHQ, HTCP…TCSA, RTCS…SCAY, PTCF…GCSH, HSCS…NCTN, GGCH…NCEG, HVCD…NCES, and LVCK…GELC. 6 residues coordinate Ca(2+): tryptophan 869, aspartate 872, aspartate 874, aspartate 876, aspartate 882, and glutamate 883. The N-linked (GlcNAc...) asparagine glycan is linked to asparagine 926. Residues tryptophan 1030, aspartate 1033, aspartate 1035, aspartate 1037, aspartate 1043, and glutamate 1044 each contribute to the Ca(2+) site. An N-linked (GlcNAc...) asparagine glycan is attached at asparagine 1048. 6 residues coordinate Ca(2+): tryptophan 1078, aspartate 1081, aspartate 1083, aspartate 1085, aspartate 1091, and glutamate 1092. Asparagine 1152 and asparagine 1153 each carry an N-linked (GlcNAc...) asparagine glycan. EGF-like domains follow at residues 1181-1220 and 1221-1260; these read DQCS…KTCQ and IQSY…ESCR. Residues asparagine 1193 and asparagine 1216 are each glycosylated (N-linked (GlcNAc...) asparagine). Asparagine 1305 is a glycosylation site (N-linked (GlcNAc...) asparagine). 5 LDL-receptor class B repeats span residues 1307–1353, 1354–1396, 1397–1443, 1444–1488, and 1489–1529; these read SSLY…DWIA, GNIY…DPRY, GILF…DYLE, KRIL…YGGE, and VYWT…YHPS. N-linked (GlcNAc...) asparagine glycosylation occurs at asparagine 1509. One can recognise an EGF-like 7 domain in the interval 1534-1577; the sequence is APNPCEANGGKGPCSHLCLINYNRTLSCACPHLMKLDKDNTTCY. 3 disulfides stabilise this stretch: cysteine 1538-cysteine 1551, cysteine 1547-cysteine 1561, and cysteine 1563-cysteine 1576. 4 N-linked (GlcNAc...) asparagine glycosylation sites follow: asparagine 1556, asparagine 1573, asparagine 1614, and asparagine 1643. 4 LDL-receptor class B repeats span residues 1625-1667, 1668-1711, 1712-1751, and 1752-1796; these read QRIY…DWVS, RNLF…HPLH, GKLY…DYPE, and SKLY…MGDK. 4 N-linked (GlcNAc...) asparagine glycosylation sites follow: asparagine 1721, asparagine 1731, asparagine 1761, and asparagine 1823. Positions 1842-1883 constitute an EGF-like 8 domain; sequence GSNPCSVNNGDCSQLCLPTSETSRSCMCTAGYSLKSGQQSCE. 3 disulfides stabilise this stretch: cysteine 1846–cysteine 1857, cysteine 1853–cysteine 1867, and cysteine 1869–cysteine 1882. Asparagine 1929 carries an N-linked (GlcNAc...) asparagine glycan. 4 LDL-receptor class B repeats span residues 1930–1972, 1973–2015, 2016–2059, and 2060–2103; these read DTIY…DWIA, GNIY…HPEK, GYLF…DYED, and GKLY…FEDY. N-linked (GlcNAc...) asparagine glycosylation is found at asparagine 1991 and asparagine 2044. Asparagine 2113 and asparagine 2123 each carry an N-linked (GlcNAc...) asparagine glycan. Positions 2151–2191 constitute an EGF-like 9 domain; that stretch reads GTNVCAQNNGGCQQLCLFRGGGRRTCACAHGMLSEDGVSCR. 3 cysteine pairs are disulfide-bonded: cysteine 2155-cysteine 2166, cysteine 2162-cysteine 2176, and cysteine 2178-cysteine 2190. 5 LDL-receptor class B repeats span residues 2247–2288, 2289–2337, 2338–2382, 2383–2425, and 2426–2467; these read NRIF…HRGW, DTLY…DECQ, NLMF…DHRA, EKIY…YGDY, and IFWT…VAND. Asparagine 2466 carries N-linked (GlcNAc...) asparagine glycosylation. Residues 2472–2512 form the EGF-like 10 domain; that stretch reads ELSPCRVNNGGCQDLCLLTPKGHVNCSCRGERVLQEDFTCK. 3 disulfide bridges follow: cysteine 2476/cysteine 2487, cysteine 2483/cysteine 2497, and cysteine 2499/cysteine 2511. An N-linked (GlcNAc...) asparagine glycan is attached at asparagine 2496. Asparagine 2515 carries N-linked (GlcNAc...) asparagine glycosylation. LDL-receptor class A domains lie at 2516-2557, 2558-2596, 2597-2635, 2636-2684, 2688-2730, 2730-2769, and 2770-2812; these read STCN…YCSS, RKCK…PCNK, TSCA…NCTA, TDCS…NCPG, PKCP…RQDK, KFCY…RCRL, and TTCS…GCLY. Disulfide bonds link cysteine 2518/cysteine 2531, cysteine 2526/cysteine 2544, cysteine 2538/cysteine 2555, cysteine 2560/cysteine 2572, cysteine 2567/cysteine 2585, and cysteine 2579/cysteine 2594. Residue asparagine 2595 is glycosylated (N-linked (GlcNAc...) asparagine). Intrachain disulfides connect cysteine 2599–cysteine 2611, cysteine 2606–cysteine 2624, cysteine 2618–cysteine 2633, cysteine 2638–cysteine 2660, cysteine 2654–cysteine 2673, cysteine 2667–cysteine 2682, cysteine 2690–cysteine 2702, cysteine 2697–cysteine 2715, cysteine 2709–cysteine 2724, cysteine 2732–cysteine 2744, cysteine 2739–cysteine 2757, cysteine 2751–cysteine 2767, cysteine 2772–cysteine 2785, cysteine 2779–cysteine 2798, and cysteine 2792–cysteine 2810. N-linked (GlcNAc...) asparagine glycans are attached at residues asparagine 2614 and asparagine 2632. Asparagine 2813 carries N-linked (GlcNAc...) asparagine glycosylation. 3 consecutive LDL-receptor class A domains span residues 2814 to 2853, 2854 to 2897, and 2900 to 2938; these read NTCD…ECEY, PTCG…RCSS, and SKCN…NCFI. 15 disulfide bridges follow: cysteine 2816–cysteine 2828, cysteine 2823–cysteine 2841, cysteine 2835–cysteine 2851, cysteine 2856–cysteine 2868, cysteine 2863–cysteine 2882, cysteine 2876–cysteine 2895, cysteine 2902–cysteine 2914, cysteine 2909–cysteine 2927, cysteine 2921–cysteine 2936, cysteine 2941–cysteine 2953, cysteine 2949–cysteine 2962, cysteine 2964–cysteine 2977, cysteine 2983–cysteine 2993, cysteine 2989–cysteine 3002, and cysteine 3004–cysteine 3018. Asparagine 2903 is a glycosylation site (N-linked (GlcNAc...) asparagine). In terms of domain architecture, EGF-like 11 spans 2939 to 2978; sequence NECLNKKLSGCSQECEDLKIGYKCRCRPGFRLKDDGKTCI. In terms of domain architecture, EGF-like 12; calcium-binding spans 2979–3019; that stretch reads DIDECSTTYPCSQKCINTLGSYKCLCIEGYKLKPDNPTSCK. 2 N-linked (GlcNAc...) asparagine glycosylation sites follow: asparagine 3045 and asparagine 3086. LDL-receptor class B repeat units follow at residues 3066-3110, 3111-3153, 3154-3197, 3198-3240, and 3241-3281; these read QMIY…DWVG, GNLY…DVQN, GYLY…DYIN, SRIY…FEDY, and IYWT…YHPY. An N-linked (GlcNAc...) asparagine glycan is attached at asparagine 3176. Asparagine 3261 carries an N-linked (GlcNAc...) asparagine glycan. The 42-residue stretch at 3287 to 3328 folds into the EGF-like 13 domain; the sequence is PNHPCKTNNAGCSNLCLLSPGGGHKCACPTNFYLGSDGKTCV. Intrachain disulfides connect cysteine 3291/cysteine 3302, cysteine 3298/cysteine 3312, and cysteine 3314/cysteine 3327. LDL-receptor class A domains lie at 3329–3368, 3369–3407, 3408–3447, 3448–3488, 3489–3530, 3531–3569, 3570–3608, 3608–3646, 3649–3689, 3690–3730, and 3736–3776; these read SNCT…DCPE, FKCR…NCDI, HVCL…DCPE, VTCA…NCTQ, MTCG…ECDE, RTCE…SCTP, RPCS…DCIP, PRCE…DCGT, RTCP…ECLK, FQCP…DCES, and KSCS…SCSH. N-linked (GlcNAc...) asparagine glycosylation is present at asparagine 3330. Intrachain disulfides connect cysteine 3331-cysteine 3343, cysteine 3338-cysteine 3356, cysteine 3350-cysteine 3366, cysteine 3371-cysteine 3383, cysteine 3378-cysteine 3396, cysteine 3390-cysteine 3405, cysteine 3410-cysteine 3423, cysteine 3417-cysteine 3436, cysteine 3430-cysteine 3445, cysteine 3450-cysteine 3463, cysteine 3457-cysteine 3476, cysteine 3470-cysteine 3486, cysteine 3491-cysteine 3504, cysteine 3498-cysteine 3517, cysteine 3511-cysteine 3528, cysteine 3533-cysteine 3545, cysteine 3540-cysteine 3558, cysteine 3552-cysteine 3567, cysteine 3572-cysteine 3584, cysteine 3579-cysteine 3597, cysteine 3591-cysteine 3606, cysteine 3610-cysteine 3622, cysteine 3617-cysteine 3635, cysteine 3629-cysteine 3644, cysteine 3658-cysteine 3676, cysteine 3670-cysteine 3687, cysteine 3692-cysteine 3706, cysteine 3700-cysteine 3719, cysteine 3713-cysteine 3728, cysteine 3738-cysteine 3752, cysteine 3747-cysteine 3765, cysteine 3759-cysteine 3774, cysteine 3783-cysteine 3796, cysteine 3790-cysteine 3805, cysteine 3807-cysteine 3820, cysteine 3826-cysteine 3836, cysteine 3832-cysteine 3845, and cysteine 3847-cysteine 3858. Residue asparagine 3485 is glycosylated (N-linked (GlcNAc...) asparagine). Asparagine 3659 carries an N-linked (GlcNAc...) asparagine glycan. 2 consecutive EGF-like domains span residues 3779–3821 and 3822–3859; these read KSYD…NSCQ and DVNE…NMCK. Residue asparagine 3786 is glycosylated (N-linked (GlcNAc...) asparagine). Asparagine 3837 carries N-linked (GlcNAc...) asparagine glycosylation. LDL-receptor class B repeat units follow at residues 3910–3952, 3969–4011, 4012–4055, and 4056–4100; these read NKIY…THLN, GNIY…DPLR, GTMY…DYHN, and ERLY…FEDY. Positions 3939–3942 match the Recognition site for proteolytical processing motif; sequence RNRR. Asparagine 3952 carries N-linked (GlcNAc...) asparagine glycosylation. N-linked (GlcNAc...) asparagine glycans are attached at residues asparagine 4074 and asparagine 4124. EGF-like domains follow at residues 4146-4182, 4195-4231, 4231-4267, 4267-4303, 4303-4339, 4339-4374, and 4372-4409; these read VTNP…GTCV, TTDT…ERCQ, QINQ…SRCD, DQQV…DRCQ, QYQQ…AQCQ, QDNK…PSCL, and SCLT…MRCE. 21 disulfides stabilise this stretch: cysteine 4150/cysteine 4159, cysteine 4155/cysteine 4168, cysteine 4170/cysteine 4181, cysteine 4199/cysteine 4209, cysteine 4203/cysteine 4219, cysteine 4221/cysteine 4230, cysteine 4235/cysteine 4245, cysteine 4239/cysteine 4255, cysteine 4257/cysteine 4266, cysteine 4271/cysteine 4281, cysteine 4275/cysteine 4291, cysteine 4293/cysteine 4302, cysteine 4307/cysteine 4317, cysteine 4311/cysteine 4327, cysteine 4329/cysteine 4338, cysteine 4343/cysteine 4351, cysteine 4346/cysteine 4362, cysteine 4364/cysteine 4373, cysteine 4376/cysteine 4386, cysteine 4380/cysteine 4397, and cysteine 4399/cysteine 4408. The N-linked (GlcNAc...) asparagine glycan is linked to asparagine 4178. N-linked (GlcNAc...) asparagine glycosylation is present at asparagine 4278. Residues 4420 to 4443 traverse the membrane as a helical segment; that stretch reads RTASIVIPILLLLLLLAVVAFAWY. Residues 4444–4543 are Cytoplasmic-facing; that stretch reads KWRIKGAKGF…ADDDLTDPLA (100 aa). The NPXY motif motif lies at 4501–4506; sequence FTNPVY. A disordered region spans residues 4522–4543; that stretch reads STDEKRELLARGADDDLTDPLA. Positions 4523–4535 are enriched in basic and acidic residues; that stretch reads TDEKRELLARGAD.

The protein belongs to the LDLR family. In terms of assembly, binds vitellogenin and LRPAP1 (alpha 2-macroglobulin). Cleaved into a 85 kDa membrane-spanning subunit (LRP-85) and a 515 kDa large extracellular domain (LRP-515) that remains non-covalently associated. As to expression, somatic.

The protein resides in the membrane. Its subcellular location is the coated pit. In terms of biological role, endocytic receptor involved in endocytosis and in phagocytosis of apoptotic cells. Involved in cellular lipid homeostasis. Involved in the plasma clearance of chylomicron remnants and activated LRPAP1 (alpha 2-macroglobulin), as well as the local metabolism of complexes between plasminogen activators and their endogenous inhibitors. Acts as an alpha-2-macroglobulin receptor. The sequence is that of Low-density lipoprotein receptor-related protein 1 (LRP1) from Gallus gallus (Chicken).